A 494-amino-acid polypeptide reads, in one-letter code: Protein DETOXIFICATION 21 (494 aa).

A2 is modified (N-acetylalanine). 12 helical membrane-spanning segments follow: residues 40-60 (LWIVAAPAIFTRFSTFGVSII), 73-95 (LAAYSITFTVLLRFSNGILLGMA), 123-143 (IVLTGCTICLTPVYIFSGPIL), 158-178 (IIALWVIGINFSFVPSFTCQM), 188-208 (IIAYVAAVSLGVHVFLSWLLM), 217-237 (GAMTSTLVAFWLPNIAQLLFV), 268-288 (GGMLCLELWYNSILVLLTGNL), 297-317 (ALAICLNINGLEMMIALGFLA), 340-360 (LTAVFTSLSLGIVLFFVFLFL), 384-404 (LLAFSILMNSVQPVLSGVAVG), 416-436 (LACYYLVGIPIGIILGYVVGL), and 441-461 (VWIGMLFGIFVQTCVLTVMTL).

This sequence belongs to the multi antimicrobial extrusion (MATE) (TC 2.A.66.1) family.

The protein localises to the membrane. The polypeptide is Protein DETOXIFICATION 21 (Arabidopsis thaliana (Mouse-ear cress)).